The following is a 392-amino-acid chain: Homeobox protein engrailed-1 (392 aa).

Disordered regions lie at residues 1–100, 132–164, 219–251, and 282–306; these read MEEQ…AQLH, ARGG…TRAP, KPSD…PAIL, and SDRP…DKRP. The segment covering 14-36 has biased composition (low complexity); sequence SALGAAAAATPGGLSLSLSPGAS. Pro residues-rich tracts occupy residues 51 to 66 and 75 to 84; these read SPQP…PCLP and PPHPPPPPPQ. The segment covering 85 to 100 has biased composition (low complexity); the sequence is HLAAPAHQPQPAAQLH. The segment covering 223–236 has biased composition (gly residues); that stretch reads TGGGGSGGGAGSPG. A DNA-binding region (homeobox) is located at residues 303-362; that stretch reads DKRPRTAFTAEQLQRLKAEFQANRYITEQRRQTLAQELSLNESQIKIWFQNKRAKIKKAT.

It belongs to the engrailed homeobox family.

It is found in the nucleus. Required for proper formation of the apical ectodermal ridge and correct dorsal-ventral patterning in the limb. The chain is Homeobox protein engrailed-1 (EN1) from Homo sapiens (Human).